A 68-amino-acid polypeptide reads, in one-letter code: Putative transcript Y 10 protein (68 aa).

This chain is Putative transcript Y 10 protein (TTTY10), found in Homo sapiens (Human).